The primary structure comprises 263 residues: Hydroxyethylthiazole kinase 1 (263 aa).

A substrate-binding site is contributed by methionine 42. 2 residues coordinate ATP: lysine 118 and threonine 164. Glycine 191 contributes to the substrate binding site.

The protein belongs to the Thz kinase family. Requires Mg(2+) as cofactor.

The enzyme catalyses 5-(2-hydroxyethyl)-4-methylthiazole + ATP = 4-methyl-5-(2-phosphooxyethyl)-thiazole + ADP + H(+). Its pathway is cofactor biosynthesis; thiamine diphosphate biosynthesis; 4-methyl-5-(2-phosphoethyl)-thiazole from 5-(2-hydroxyethyl)-4-methylthiazole: step 1/1. Its function is as follows. Catalyzes the phosphorylation of the hydroxyl group of 4-methyl-5-beta-hydroxyethylthiazole (THZ). This Clostridium botulinum (strain Okra / Type B1) protein is Hydroxyethylthiazole kinase 1.